Here is a 243-residue protein sequence, read N- to C-terminus: Uridylate kinase (243 aa).

12-15 is an ATP binding site; it reads KLSG. Gly54 lines the UMP pocket. Residues Gly55 and Arg59 each contribute to the ATP site. 135-142 contributes to the UMP binding site; that stretch reads TGNPYFTT. ATP contacts are provided by Asn163, Tyr169, and Asp172.

It belongs to the UMP kinase family. In terms of assembly, homohexamer.

It localises to the cytoplasm. The enzyme catalyses UMP + ATP = UDP + ADP. It participates in pyrimidine metabolism; CTP biosynthesis via de novo pathway; UDP from UMP (UMPK route): step 1/1. Inhibited by UTP. Functionally, catalyzes the reversible phosphorylation of UMP to UDP. This chain is Uridylate kinase, found in Roseiflexus sp. (strain RS-1).